A 160-amino-acid chain; its full sequence is Phosphopantetheine adenylyltransferase (160 aa).

Thr9 serves as a coordination point for substrate. ATP-binding positions include 9–10 (TF) and His17. Residues Lys41, Leu73, and Arg87 each coordinate substrate. ATP-binding positions include 88 to 90 (GLR), Glu98, and 123 to 129 (LSYISST).

This sequence belongs to the bacterial CoaD family. In terms of assembly, homohexamer. It depends on Mg(2+) as a cofactor.

It is found in the cytoplasm. It carries out the reaction (R)-4'-phosphopantetheine + ATP + H(+) = 3'-dephospho-CoA + diphosphate. Its pathway is cofactor biosynthesis; coenzyme A biosynthesis; CoA from (R)-pantothenate: step 4/5. In terms of biological role, reversibly transfers an adenylyl group from ATP to 4'-phosphopantetheine, yielding dephospho-CoA (dPCoA) and pyrophosphate. The chain is Phosphopantetheine adenylyltransferase from Marinobacter nauticus (strain ATCC 700491 / DSM 11845 / VT8) (Marinobacter aquaeolei).